We begin with the raw amino-acid sequence, 152 residues long: SKP1-like protein 11 (152 aa).

Positions 94 to 152 (ILAANYLNIKSLLDLTCQTVADMIKGKTPEEIRSTFNIENDFTPEEEEAVRKENQWAFE) are interaction with the F-box domain of F-box proteins.

It belongs to the SKP1 family. In terms of assembly, part of a SCF (SKP1-cullin-F-box) protein ligase complex. Interacts with ADO3/FKF1, COI1/FBL2, EBF1/FBL6, PP2A13, PP2B10, UFO, SKIP2, SKIP15, SKIP16, SKIP32, CPR1/CPR30, At1g55000, At1g67340, At1g78100, At3g04660, At3g16740, At3g61590, At4g38940 and At5g49610. Expressed in young seedlings, cotyledons, roots, leaves, floral stems, inflorescences, pollen, and siliques, with a slightly higher level in inflorescence than in other tissues.

It localises to the nucleus. It functions in the pathway protein modification; protein ubiquitination. Functionally, involved in ubiquitination and subsequent proteasomal degradation of target proteins. Together with CUL1, RBX1 and a F-box protein, it forms a SCF E3 ubiquitin ligase complex. The functional specificity of this complex depends on the type of F-box protein. In the SCF complex, it serves as an adapter that links the F-box protein to CUL1. Plays a role during early flowers reproductive development. The protein is SKP1-like protein 11 (ASK11) of Arabidopsis thaliana (Mouse-ear cress).